The following is a 717-amino-acid chain: Catalase-peroxidase (717 aa).

A signal peptide spans 1–12 (MTSKGMCPVAHG). Positions 93-221 (WHSAGSYRIA…LAAVMMGLIY (129 aa)) form a cross-link, tryptophyl-tyrosyl-methioninium (Trp-Tyr) (with M-247). H94 acts as the Proton acceptor in catalysis. The segment at residues 221 to 247 (YVNPEGVDGKPDPLKTAQDMRVTFARM) is a cross-link (tryptophyl-tyrosyl-methioninium (Tyr-Met) (with W-93)). H262 lines the heme b pocket.

Belongs to the peroxidase family. Peroxidase/catalase subfamily. As to quaternary structure, homodimer or homotetramer. Requires heme b as cofactor. In terms of processing, formation of the three residue Trp-Tyr-Met cross-link is important for the catalase, but not the peroxidase activity of the enzyme.

The enzyme catalyses H2O2 + AH2 = A + 2 H2O. It catalyses the reaction 2 H2O2 = O2 + 2 H2O. Its function is as follows. Bifunctional enzyme with both catalase and broad-spectrum peroxidase activity. The sequence is that of Catalase-peroxidase from Polynucleobacter asymbioticus (strain DSM 18221 / CIP 109841 / QLW-P1DMWA-1) (Polynucleobacter necessarius subsp. asymbioticus).